Here is a 385-residue protein sequence, read N- to C-terminus: Methionine aminopeptidase 1 (385 aa).

The C6H2-type zinc-finger motif lies at 6–59 (TRVCETAGCSSEAKLQCPTCLKLGIQGSYFCSQECFKGSWATHKLLHKKAKDEK). Positions 9, 14, 22, 25, 36, 40, 48, and 52 each coordinate Zn(2+). Residue His203 coordinates a protein. Asp220, Asp231, and His294 together coordinate Zn(2+). His301 contributes to the a protein binding site. Residues Glu327 and Glu358 each coordinate Zn(2+).

It belongs to the peptidase M24A family. Methionine aminopeptidase type 1 subfamily. Associates with the 60S ribosomal subunit of the 80S translational complex. Requires Zn(2+) as cofactor. Co(2+) is required as a cofactor. Mn(2+) serves as cofactor. It depends on Fe(2+) as a cofactor.

It localises to the cytoplasm. The enzyme catalyses Release of N-terminal amino acids, preferentially methionine, from peptides and arylamides.. Its function is as follows. Cotranslationally removes the N-terminal methionine from nascent proteins. The N-terminal methionine is often cleaved when the second residue in the primary sequence is small and uncharged (Met-Ala-, Cys, Gly, Pro, Ser, Thr, or Val). The protein is Methionine aminopeptidase 1 (METAP1) of Gallus gallus (Chicken).